The sequence spans 385 residues: UPF0284 protein PMT9312_0438 (385 aa).

It belongs to the UPF0284 family.

The polypeptide is UPF0284 protein PMT9312_0438 (Prochlorococcus marinus (strain MIT 9312)).